Reading from the N-terminus, the 114-residue chain is Probable 4-amino-4-deoxy-L-arabinose-phosphoundecaprenol flippase subunit ArnE (114 aa).

Helical transmembrane passes span 41-61 (PWLI…IYLL), 64-84 (LPLS…LVGS), and 94-114 (YHNW…GGLL). The 70-residue stretch at 43–112 (LIASVAALGC…IIVGALLLGG (70 aa)) folds into the EamA domain.

This sequence belongs to the ArnE family. As to quaternary structure, heterodimer of ArnE and ArnF.

It is found in the cell inner membrane. It functions in the pathway bacterial outer membrane biogenesis; lipopolysaccharide biosynthesis. Functionally, translocates 4-amino-4-deoxy-L-arabinose-phosphoundecaprenol (alpha-L-Ara4N-phosphoundecaprenol) from the cytoplasmic to the periplasmic side of the inner membrane. The polypeptide is Probable 4-amino-4-deoxy-L-arabinose-phosphoundecaprenol flippase subunit ArnE (Aeromonas hydrophila subsp. hydrophila (strain ATCC 7966 / DSM 30187 / BCRC 13018 / CCUG 14551 / JCM 1027 / KCTC 2358 / NCIMB 9240 / NCTC 8049)).